The chain runs to 289 residues: Nodulation protein NolT (289 aa).

The N-terminal stretch at 1 to 33 is a signal peptide; sequence MFGSAHGDTTSSDTSGRRPLRLVVLPLLLALSS. A lipid anchor (N-palmitoyl cysteine) is attached at C34. Residue C34 is the site of S-diacylglycerol cysteine attachment. The chain crosses the membrane as a helical span at residues 233–253; sequence VAVGVGAAVFAVTCYLLFIVL.

It belongs to the YscJ lipoprotein family.

The protein resides in the cell outer membrane. Its function is as follows. Regulates cultivar-specific nodulation of soybean. In Rhizobium fredii (Sinorhizobium fredii), this protein is Nodulation protein NolT (nolT).